The chain runs to 353 residues: tRNA-specific 2-thiouridylase MnmA 2 (353 aa).

ATP-binding positions include 9 to 16 (AMSGGVDS) and Met-35. Cys-98 acts as the Nucleophile in catalysis. A disulfide bridge connects residues Cys-98 and Cys-194. Gly-122 contacts ATP. The segment at 144–146 (KDQ) is interaction with tRNA. The Cysteine persulfide intermediate role is filled by Cys-194. The segment at 300–301 (RY) is interaction with tRNA.

It belongs to the MnmA/TRMU family.

Its subcellular location is the cytoplasm. The catalysed reaction is S-sulfanyl-L-cysteinyl-[protein] + uridine(34) in tRNA + AH2 + ATP = 2-thiouridine(34) in tRNA + L-cysteinyl-[protein] + A + AMP + diphosphate + H(+). In terms of biological role, catalyzes the 2-thiolation of uridine at the wobble position (U34) of tRNA, leading to the formation of s(2)U34. The protein is tRNA-specific 2-thiouridylase MnmA 2 of Clostridium botulinum (strain Langeland / NCTC 10281 / Type F).